The sequence spans 79 residues: Translational regulator CsrA (79 aa).

This sequence belongs to the CsrA/RsmA family. Homodimer; the beta-strands of each monomer intercalate to form a hydrophobic core, while the alpha-helices form wings that extend away from the core.

It localises to the cytoplasm. In terms of biological role, a translational regulator that binds mRNA to regulate translation initiation and/or mRNA stability. Usually binds in the 5'-UTR at or near the Shine-Dalgarno sequence preventing ribosome-binding, thus repressing translation. Its main target seems to be the major flagellin gene, while its function is anatagonized by FliW. The chain is Translational regulator CsrA from Shouchella clausii (strain KSM-K16) (Alkalihalobacillus clausii).